The sequence spans 576 residues: Proline--tRNA ligase (576 aa).

The protein belongs to the class-II aminoacyl-tRNA synthetase family. ProS type 1 subfamily. As to quaternary structure, homodimer.

It localises to the cytoplasm. The enzyme catalyses tRNA(Pro) + L-proline + ATP = L-prolyl-tRNA(Pro) + AMP + diphosphate. Functionally, catalyzes the attachment of proline to tRNA(Pro) in a two-step reaction: proline is first activated by ATP to form Pro-AMP and then transferred to the acceptor end of tRNA(Pro). As ProRS can inadvertently accommodate and process non-cognate amino acids such as alanine and cysteine, to avoid such errors it has two additional distinct editing activities against alanine. One activity is designated as 'pretransfer' editing and involves the tRNA(Pro)-independent hydrolysis of activated Ala-AMP. The other activity is designated 'posttransfer' editing and involves deacylation of mischarged Ala-tRNA(Pro). The misacylated Cys-tRNA(Pro) is not edited by ProRS. This is Proline--tRNA ligase from Leptospira borgpetersenii serovar Hardjo-bovis (strain L550).